The primary structure comprises 240 residues: Insulin-like growth factor-binding protein 6 (240 aa).

The first 27 residues, 1–27 (MTPHRLLPPLLLLLALLLAASPGGALA), serve as a signal peptide directing secretion. One can recognise an IGFBP N-terminal domain in the interval 28 to 107 (RCPGCGQGVQ…LLGRGRCLPA (80 aa)). 5 cysteine pairs are disulfide-bonded: cysteine 29/cysteine 32, cysteine 40/cysteine 44, cysteine 57/cysteine 63, cysteine 71/cysteine 84, and cysteine 78/cysteine 104. A disordered region spans residues 109-160 (APAVAEENPKESKPQAGTARPQDVNRRDQQRNPGTSTTPSQPNSAGVQDTEM). O-linked (HexNAc...) threonine glycosylation occurs at threonine 126. A compositionally biased stretch (polar residues) spans 139 to 155 (RNPGTSTTPSQPNSAGV). Serine 144 carries an O-linked (HexNAc...) serine glycan. 2 O-linked (HexNAc...) threonine glycosylation sites follow: threonine 145 and threonine 146. O-linked (HexNAc...) serine glycosylation occurs at serine 152. The Thyroglobulin type-1 domain maps to 160-234 (MGPCRRHLDS…SPDGNGSSSC (75 aa)). Disulfide bonds link cysteine 163/cysteine 190, cysteine 201/cysteine 212, and cysteine 214/cysteine 234. The disordered stretch occupies residues 217–240 (RMGKSLPGSPDGNGSSSCPTGSSG). The segment covering 228–240 (GNGSSSCPTGSSG) has biased composition (polar residues).

Interacts (via C-terminal domain) with PHB2. O-linked glycans consist of hexose (probably Gal), N-acetylhexosamine (probably GalNAc) and sialic acid residues. O-glycosylated with core 1 or possibly core 8 glycans. O-glycosylated on one site only in the region AA 143-168 in cerebrospinal fluid.

It is found in the secreted. Its function is as follows. IGF-binding proteins prolong the half-life of the IGFs and have been shown to either inhibit or stimulate the growth promoting effects of the IGFs on cell culture. They alter the interaction of IGFs with their cell surface receptors. Activates the MAPK signaling pathway and induces cell migration. The protein is Insulin-like growth factor-binding protein 6 of Homo sapiens (Human).